The primary structure comprises 183 residues: Threonylcarbamoyl-AMP synthase (183 aa).

Residues Met-1–Gly-183 form the YrdC-like domain.

The protein belongs to the SUA5 family. TsaC subfamily.

The protein localises to the cytoplasm. It carries out the reaction L-threonine + hydrogencarbonate + ATP = L-threonylcarbamoyladenylate + diphosphate + H2O. Functionally, required for the formation of a threonylcarbamoyl group on adenosine at position 37 (t(6)A37) in tRNAs that read codons beginning with adenine. Catalyzes the conversion of L-threonine, HCO(3)(-)/CO(2) and ATP to give threonylcarbamoyl-AMP (TC-AMP) as the acyladenylate intermediate, with the release of diphosphate. This chain is Threonylcarbamoyl-AMP synthase, found in Pasteurella multocida (strain Pm70).